A 489-amino-acid chain; its full sequence is Glycogen synthase (489 aa).

Lys-15 serves as a coordination point for ADP-alpha-D-glucose.

The protein belongs to the glycosyltransferase 1 family. Bacterial/plant glycogen synthase subfamily.

The enzyme catalyses [(1-&gt;4)-alpha-D-glucosyl](n) + ADP-alpha-D-glucose = [(1-&gt;4)-alpha-D-glucosyl](n+1) + ADP + H(+). It functions in the pathway glycan biosynthesis; glycogen biosynthesis. Synthesizes alpha-1,4-glucan chains using ADP-glucose. The sequence is that of Glycogen synthase from Francisella tularensis subsp. holarctica (strain FTNF002-00 / FTA).